Consider the following 247-residue polypeptide: Cell division protein ZapD (247 aa).

It belongs to the ZapD family. In terms of assembly, interacts with FtsZ.

The protein localises to the cytoplasm. Cell division factor that enhances FtsZ-ring assembly. Directly interacts with FtsZ and promotes bundling of FtsZ protofilaments, with a reduction in FtsZ GTPase activity. This Escherichia coli O139:H28 (strain E24377A / ETEC) protein is Cell division protein ZapD.